Here is a 137-residue protein sequence, read N- to C-terminus: Large ribosomal subunit protein uL16c (137 aa).

This sequence belongs to the universal ribosomal protein uL16 family. Part of the 50S ribosomal subunit.

It localises to the plastid. The chain is Large ribosomal subunit protein uL16c from Aneura mirabilis (Parasitic liverwort).